Reading from the N-terminus, the 72-residue chain is Small proline-rich protein 2D (72 aa).

Residues 1-11 are compositionally biased toward low complexity; sequence MSYQQQQCKQP. Residues 1–20 are disordered; sequence MSYQQQQCKQPCQPPPVCPT. 3 tandem repeats follow at residues 21 to 29, 30 to 38, and 39 to 47. Residues 21-47 form a 3 X 9 AA tandem repeats of P-K-C-P-[EQ]-P-C-P-[PS] region; the sequence is PKCPEPCPPPKCPEPCPSPKCPQPCPP. Pro residues-rich tracts occupy residues 33–47 and 56–72; these read PEPCPSPKCPQPCPP and PVTPSPPCQPKCPPKSK. The tract at residues 33–72 is disordered; sequence PEPCPSPKCPQPCPPQQCQQKYPPVTPSPPCQPKCPPKSK.

It belongs to the cornifin (SPRR) family.

It localises to the cytoplasm. Its function is as follows. Cross-linked envelope protein of keratinocytes. It is a keratinocyte protein that first appears in the cell cytosol, but ultimately becomes cross-linked to membrane proteins by transglutaminase. All that results in the formation of an insoluble envelope beneath the plasma membrane. The protein is Small proline-rich protein 2D (SPRR2D) of Homo sapiens (Human).